Consider the following 123-residue polypeptide: Large ribosomal subunit protein uL29 (123 aa).

This sequence belongs to the universal ribosomal protein uL29 family.

The protein is Large ribosomal subunit protein uL29 (RPL35) of Theileria lestoquardi.